Consider the following 370-residue polypeptide: Dual-specificity RNA methyltransferase RlmN (370 aa).

Residue Glu93 is the Proton acceptor of the active site. The Radical SAM core domain maps to 99-337 (EEGRGTLCVS…VTTVRKTRGD (239 aa)). A disulfide bond links Cys106 and Cys343. [4Fe-4S] cluster contacts are provided by Cys113, Cys117, and Cys120. S-adenosyl-L-methionine-binding positions include 167 to 168 (GE), Ser199, 221 to 223 (SLH), and Asn300. Catalysis depends on Cys343, which acts as the S-methylcysteine intermediate.

The protein belongs to the radical SAM superfamily. RlmN family. The cofactor is [4Fe-4S] cluster.

The protein localises to the cytoplasm. The catalysed reaction is adenosine(2503) in 23S rRNA + 2 reduced [2Fe-2S]-[ferredoxin] + 2 S-adenosyl-L-methionine = 2-methyladenosine(2503) in 23S rRNA + 5'-deoxyadenosine + L-methionine + 2 oxidized [2Fe-2S]-[ferredoxin] + S-adenosyl-L-homocysteine. It carries out the reaction adenosine(37) in tRNA + 2 reduced [2Fe-2S]-[ferredoxin] + 2 S-adenosyl-L-methionine = 2-methyladenosine(37) in tRNA + 5'-deoxyadenosine + L-methionine + 2 oxidized [2Fe-2S]-[ferredoxin] + S-adenosyl-L-homocysteine. Functionally, specifically methylates position 2 of adenine 2503 in 23S rRNA and position 2 of adenine 37 in tRNAs. m2A2503 modification seems to play a crucial role in the proofreading step occurring at the peptidyl transferase center and thus would serve to optimize ribosomal fidelity. The polypeptide is Dual-specificity RNA methyltransferase RlmN (Francisella tularensis subsp. holarctica (strain FTNF002-00 / FTA)).